The primary structure comprises 404 residues: Cysteine desulfurase IscS (404 aa).

Residues 75-76, N155, Q183, and 203-205 contribute to the pyridoxal 5'-phosphate site; these read AT and SAH. Residue K206 is modified to N6-(pyridoxal phosphate)lysine. T243 is a pyridoxal 5'-phosphate binding site. Catalysis depends on C328, which acts as the Cysteine persulfide intermediate. C328 contributes to the [2Fe-2S] cluster binding site.

This sequence belongs to the class-V pyridoxal-phosphate-dependent aminotransferase family. NifS/IscS subfamily. Homodimer. Forms a heterotetramer with IscU, interacts with other sulfur acceptors. Pyridoxal 5'-phosphate is required as a cofactor.

It is found in the cytoplasm. The enzyme catalyses (sulfur carrier)-H + L-cysteine = (sulfur carrier)-SH + L-alanine. The protein operates within cofactor biosynthesis; iron-sulfur cluster biosynthesis. Its function is as follows. Master enzyme that delivers sulfur to a number of partners involved in Fe-S cluster assembly, tRNA modification or cofactor biosynthesis. Catalyzes the removal of elemental sulfur atoms from cysteine to produce alanine. Functions as a sulfur delivery protein for Fe-S cluster synthesis onto IscU, an Fe-S scaffold assembly protein, as well as other S acceptor proteins. This Pseudomonas fluorescens (strain ATCC BAA-477 / NRRL B-23932 / Pf-5) protein is Cysteine desulfurase IscS.